A 216-amino-acid polypeptide reads, in one-letter code: 3-isopropylmalate dehydratase small subunit (216 aa).

Belongs to the LeuD family. LeuD type 1 subfamily. In terms of assembly, heterodimer of LeuC and LeuD.

The catalysed reaction is (2R,3S)-3-isopropylmalate = (2S)-2-isopropylmalate. It functions in the pathway amino-acid biosynthesis; L-leucine biosynthesis; L-leucine from 3-methyl-2-oxobutanoate: step 2/4. Functionally, catalyzes the isomerization between 2-isopropylmalate and 3-isopropylmalate, via the formation of 2-isopropylmaleate. The sequence is that of 3-isopropylmalate dehydratase small subunit from Burkholderia ambifaria (strain MC40-6).